We begin with the raw amino-acid sequence, 366 residues long: 3-dehydroquinate synthase (366 aa).

Residues 71–76, 105–109, 129–130, Lys142, Lys151, and 169–172 each bind NAD(+); these read DGEQYK, GVIGD, TT, and CLQT. The Zn(2+) site is built by Glu184, His248, and His265.

It belongs to the sugar phosphate cyclases superfamily. Dehydroquinate synthase family. Requires NAD(+) as cofactor. The cofactor is Co(2+). It depends on Zn(2+) as a cofactor.

The protein resides in the cytoplasm. It catalyses the reaction 7-phospho-2-dehydro-3-deoxy-D-arabino-heptonate = 3-dehydroquinate + phosphate. It functions in the pathway metabolic intermediate biosynthesis; chorismate biosynthesis; chorismate from D-erythrose 4-phosphate and phosphoenolpyruvate: step 2/7. Catalyzes the conversion of 3-deoxy-D-arabino-heptulosonate 7-phosphate (DAHP) to dehydroquinate (DHQ). The protein is 3-dehydroquinate synthase of Photorhabdus laumondii subsp. laumondii (strain DSM 15139 / CIP 105565 / TT01) (Photorhabdus luminescens subsp. laumondii).